Reading from the N-terminus, the 86-residue chain is Large ribosomal subunit protein bL31B (86 aa).

It belongs to the bacterial ribosomal protein bL31 family. Type B subfamily. As to quaternary structure, part of the 50S ribosomal subunit.

This chain is Large ribosomal subunit protein bL31B, found in Salmonella agona (strain SL483).